Consider the following 458-residue polypeptide: F-box/WD repeat-containing protein 9 (458 aa).

Position 1 is an N-acetylmethionine (methionine 1). 2 disordered regions span residues 1 to 30 (MELPLGRCDDSRTWDDDSDPESETDPDAQA) and 42 to 64 (KSGLAFSRPSQLSTPAASPSASE). Positions 16–26 (DDSDPESETDP) are enriched in acidic residues. At serine 18 the chain carries Phosphoserine. Threonine 55 is subject to Phosphothreonine. Position 59 is a phosphoserine (serine 59). The F-box domain occupies 76–123 (EPGLLSLPPELLLEICSYLDARLVLHVLSRVCHALRDLVSDHVTWRLR). WD repeat units lie at residues 171-210 (GHVASVDSVLLLQGGSLCLSGSRDRNVNLWDLRQLGTESN), 220-261 (KRNS…QQFG), 264-301 (KASSAVLCLSYLPDILVTGTYDKKVTIYDPRAGPALLK), 305-342 (LHSRPVLTLLADDRHIISGSEDHTLVVVDRRANSVLQR), 344-381 (QLDSYLLCMSYQEPQLWAGDNQGLLHVFANRNGCFQLI), 387-424 (GHSFPITGIQYSVGALYTTSTDKTIRVHVPTDPPRTIC), and 427-458 (RHDNGLNRVCAEGNLVVAGSGDLSLEVWRLQA).

As to quaternary structure, interacts with SKP1 and CUL1.

In terms of biological role, substrate-recognition component of the SCF (SKP1-CUL1-F-box protein)-type E3 ubiquitin ligase complex. The polypeptide is F-box/WD repeat-containing protein 9 (FBXW9) (Homo sapiens (Human)).